A 544-amino-acid chain; its full sequence is CTP synthase (544 aa).

The amidoligase domain stretch occupies residues Met1–Leu265. Ser13 contacts CTP. Ser13 provides a ligand contact to UTP. ATP contacts are provided by residues Ser14–Ile19 and Asp71. The Mg(2+) site is built by Asp71 and Glu139. Residues Asp146 to Glu148, Lys186 to Gln191, and Lys222 contribute to the CTP site. UTP-binding positions include Lys186–Gln191 and Lys222. The Glutamine amidotransferase type-1 domain occupies Thr290 to Glu541. Position 351 (Gly351) interacts with L-glutamine. The active-site Nucleophile; for glutamine hydrolysis is the Cys378. L-glutamine is bound by residues Leu379 to Gln382, Glu402, and Arg469. Catalysis depends on residues His514 and Glu516.

This sequence belongs to the CTP synthase family. In terms of assembly, homotetramer.

The enzyme catalyses UTP + L-glutamine + ATP + H2O = CTP + L-glutamate + ADP + phosphate + 2 H(+). The catalysed reaction is L-glutamine + H2O = L-glutamate + NH4(+). It catalyses the reaction UTP + NH4(+) + ATP = CTP + ADP + phosphate + 2 H(+). The protein operates within pyrimidine metabolism; CTP biosynthesis via de novo pathway; CTP from UDP: step 2/2. Its activity is regulated as follows. Allosterically activated by GTP, when glutamine is the substrate; GTP has no effect on the reaction when ammonia is the substrate. The allosteric effector GTP functions by stabilizing the protein conformation that binds the tetrahedral intermediate(s) formed during glutamine hydrolysis. Inhibited by the product CTP, via allosteric rather than competitive inhibition. Catalyzes the ATP-dependent amination of UTP to CTP with either L-glutamine or ammonia as the source of nitrogen. Regulates intracellular CTP levels through interactions with the four ribonucleotide triphosphates. This chain is CTP synthase, found in Dichelobacter nodosus (strain VCS1703A).